Consider the following 473-residue polypeptide: BTB/POZ domain-containing protein KCTD8 (473 aa).

The tract at residues 1 to 36 (MALKDTGSGGSTILPISEMVSSSSSPGASAAAAPGP) is disordered. Low complexity predominate over residues 21–35 (SSSSSPGASAAAAPG). A BTB domain is found at 44–122 (EVVELNVGGQ…LRDKQLALPE (79 aa)). Ser78 carries the post-translational modification Phosphoserine. An Omega-N-methylarginine modification is found at Arg80. The segment at 326 to 409 (IVSPKQEHED…WIPPPDKRRN (84 aa)) is disordered. The span at 330-346 (KQEHEDRKHDKVTDKGS) shows a compositional bias: basic and acidic residues. Positions 347–388 (ESGTSCNELSTSSCDSHSEASTPQDNPSSAQQATAHQPNTLT) are enriched in polar residues. Ser410 bears the Phosphoserine mark.

As to quaternary structure, interacts as a tetramer with GABRB1 and GABRB2.

The protein resides in the presynaptic cell membrane. Its subcellular location is the postsynaptic cell membrane. Functionally, auxiliary subunit of GABA-B receptors that determine the pharmacology and kinetics of the receptor response. Increases agonist potency and markedly alter the G-protein signaling of the receptors by accelerating onset and promoting desensitization. This Homo sapiens (Human) protein is BTB/POZ domain-containing protein KCTD8 (KCTD8).